We begin with the raw amino-acid sequence, 98 residues long: RING finger protein Z (98 aa).

Over residues 1-10 (MGNTKTKDRQ) the composition is skewed to basic and acidic residues. The disordered stretch occupies residues 1-26 (MGNTKTKDRQYQSNSSQPTNTSAPVL). Residue glycine 2 is the site of N-myristoyl glycine; by host attachment. Residues 11–23 (YQSNSSQPTNTSA) show a composition bias toward polar residues. An RING-type; atypical zinc finger spans residues 41 to 77 (CRCCWFADTNLVNCSNHYLCLKCLNTMLRRSNLCDIC). The short motif at 91–94 (PSAP) is the PTAP/PSAP motif element.

Belongs to the arenaviridae Z protein family. As to quaternary structure, interacts with protein NP; this interaction probably directs the encapsidated genome to budding sites. Interacts (via RING domain) with polymerase L; this interaction inhibits viral transcription and replication, Z partially blocks the product exit tunnel for the releasing nascent RNA product. Interacts with the glycoprotein complex; this interaction plays a role in virion budding. Interacts with host eIF4E; this interaction results in eIF4E reduced affinity for its substrate, the 5'-m7 G cap structure. Interacts (via late-budding domain) with host TSG101; this interaction is essential for budding and release of viral particles. Interacts with host RPLP0; this interaction may serve to load ribosome-like particles inside the virion. Interacts with host PML; this interaction induces PML bodies redistribution in the cytoplasm upon viral infection. Myristoylation is required for the role of RING finger protein Z in assembly and budding.

The protein localises to the virion. The protein resides in the host cytoplasm. It localises to the host perinuclear region. Its subcellular location is the host cell membrane. Its function is as follows. Plays a crucial role in virion assembly and budding. Expressed late in the virus life cycle, it acts as an inhibitor of viral transcription and RNA synthesis by interacting with the viral polymerase L. Presumably recruits the NP encapsidated genome to cellular membranes at budding sites via direct interaction with NP. Plays critical roles in the final steps of viral release by interacting with host TSG101, a member of the vacuolar protein-sorting pathway and using other cellular host proteins involved in vesicle formation pathway. The budding of the virus progeny occurs after association of protein Z with the viral glycoprotein complex SSP-GP1-GP2 at the cell periphery, step that requires myristoylation of protein Z. Also selectively represses protein production by associating with host eIF4E. In cell-based minigenome assay, has an inhibitory effect on the ribonucleoprotein machinery (vRNP), which is responsible for the replication and transcription of the viral genome. The protein is RING finger protein Z of Chapare mammarenavirus (isolate Human/Bolivia/810419/2003).